Consider the following 175-residue polypeptide: DELTA-stichotoxin-She4b (175 aa).

The tract at residues 1–10 (ALAGTIIAGA) is plays an important role in the hemolytic activity. An N-terminal region region spans residues 9 to 28 (GASLTFQVLDKVLEELGKVS). Positions 52, 85, 103, 105, 131, 135, and 136 each coordinate phosphocholine. The tract at residues 103-118 (SVPFDYNWYSNWWDVK) is trp-rich region, which is important for the binding to lipid membrane. The short motif at 141–143 (RGD) is the Cell attachment site, crucial for protein stability element.

Octamer or nonamer in membranes. Monomer in the soluble state. Originally described as forming tetramer in the presence of a lipidic interface. In terms of tissue distribution, expressed in tentacles and mesenteric filaments.

The protein localises to the secreted. It is found in the nematocyst. The protein resides in the target cell membrane. Its function is as follows. Pore-forming protein that forms cations-selective hydrophilic pores of around 1 nm and causes cardiac stimulation and cytolysis. Pore formation is a multi-step process that involves specific recognition of membrane sphingomyelin (but neither cholesterol nor phosphatidylcholine) using aromatic rich region and adjacent phosphocholine (POC) binding site, firm binding to the membrane (mainly driven by hydrophobic interactions) accompanied by the transfer of the N-terminal region to the lipid-water interface and finally pore formation after oligomerization of monomers. Cytolytic effects include red blood cells hemolysis, platelet aggregation and lysis, cytotoxic and cytostatic effects on fibroblasts. Lethality in mammals has been ascribed to severe vasospasm of coronary vessels, cardiac arrhythmia, and inotropic effects. The polypeptide is DELTA-stichotoxin-She4b (Stichodactyla helianthus (Sun anemone)).